Here is a 308-residue protein sequence, read N- to C-terminus: Very-long-chain enoyl-CoA reductase (308 aa).

Residues 1–86 (MKHYEVEIRD…YFRDLGAQIS (86 aa)) lie on the Cytoplasmic side of the membrane. Lys-22 is subject to N6-acetyllysine. Position 58 is a phosphoserine (Ser-58). At Lys-60 the chain carries N6-acetyllysine. Residues 87-106 (WVTVFLTEYAGPLFIYLLFY) traverse the membrane as a helical segment. The Lumenal portion of the chain corresponds to 107–124 (FRVPFIYGRKYDFTSSRH). The helical transmembrane segment at 125–147 (TVVHLACMCHSFHYIKRLLETLF) threads the bilayer. Residues 148-158 (VHRFSHGTMPL) are Cytoplasmic-facing. A helical membrane pass occupies residues 159-180 (RNIFKNCTYYWGFAAWMAYYIN). Residues 181 to 189 (HPLYTPPTY) lie on the Lumenal side of the membrane. A helical transmembrane segment spans residues 190–216 (GVQQVKLALAVFVICQLGNFSIHMALR). Residues 217–245 (DLRPAGSKTRKIPYPTKNPFTWLFLLVSC) lie on the Cytoplasmic side of the membrane. Residues 246–262 (PNYTYEVGSWIGFAILT) traverse the membrane as a helical segment. Residues 263 to 264 (QC) are Lumenal-facing. The chain crosses the membrane as a helical span at residues 265–292 (VPVALFSLVGFTQMTIWAKGKHRSYLKE). Residues 293–308 (FRDYPPLRMPIIPFLL) lie on the Cytoplasmic side of the membrane.

Belongs to the steroid 5-alpha reductase family. Interacts with ELOVL1 and LASS2. Post-translationally, glycosylated.

The protein localises to the endoplasmic reticulum membrane. The catalysed reaction is a very-long-chain 2,3-saturated fatty acyl-CoA + NADP(+) = a very-long-chain (2E)-enoyl-CoA + NADPH + H(+). It carries out the reaction octadecanoyl-CoA + NADP(+) = (2E)-octadecenoyl-CoA + NADPH + H(+). It catalyses the reaction (2E,7Z,10Z,13Z,16Z)-docosapentaenoyl-CoA + NADPH + H(+) = (7Z,10Z,13Z,16Z)-docosatetraenoyl-CoA + NADP(+). The enzyme catalyses (2E,7Z,10Z,13Z,16Z,19Z)-docosahexaenoyl-CoA + NADPH + H(+) = (7Z,10Z,13Z,16Z,19Z)-docosapentaenoyl-CoA + NADP(+). The catalysed reaction is (2E,8Z,11Z,14Z)-eicosatetraenoyl-CoA + NADPH + H(+) = (8Z,11Z,14Z)-eicosatrienoyl-CoA + NADP(+). It carries out the reaction (2E)-hexadecenoyl-CoA + NADPH + H(+) = hexadecanoyl-CoA + NADP(+). It functions in the pathway lipid metabolism; fatty acid biosynthesis. It participates in lipid metabolism; sphingolipid metabolism. Involved in both the production of very long-chain fatty acids for sphingolipid synthesis and the degradation of the sphingosine moiety in sphingolipids through the sphingosine 1-phosphate metabolic pathway. Catalyzes the last of the four reactions of the long-chain fatty acids elongation cycle. This endoplasmic reticulum-bound enzymatic process, allows the addition of 2 carbons to the chain of long- and very long-chain fatty acids/VLCFAs per cycle. This enzyme reduces the trans-2,3-enoyl-CoA fatty acid intermediate to an acyl-CoA that can be further elongated by entering a new cycle of elongation. Thereby, it participates in the production of VLCFAs of different chain lengths that are involved in multiple biological processes as precursors of membrane lipids and lipid mediators. Catalyzes the saturation step of the sphingosine 1-phosphate metabolic pathway, the conversion of trans-2-hexadecenoyl-CoA to palmitoyl-CoA. This chain is Very-long-chain enoyl-CoA reductase (Tecr), found in Mus musculus (Mouse).